The chain runs to 186 residues: Adenine phosphoribosyltransferase (186 aa).

The protein belongs to the purine/pyrimidine phosphoribosyltransferase family. Homodimer.

The protein resides in the cytoplasm. It carries out the reaction AMP + diphosphate = 5-phospho-alpha-D-ribose 1-diphosphate + adenine. It participates in purine metabolism; AMP biosynthesis via salvage pathway; AMP from adenine: step 1/1. Catalyzes a salvage reaction resulting in the formation of AMP, that is energically less costly than de novo synthesis. The protein is Adenine phosphoribosyltransferase of Xanthomonas campestris pv. campestris (strain B100).